Consider the following 432-residue polypeptide: SVP1-like protein 2 (432 aa).

2 WD repeats span residues 223–263 (AHKS…LLYE) and 268–307 (LDRA…TSSG).

The protein belongs to the WD repeat PROPPIN family.

It localises to the vacuole membrane. It is found in the cytoplasmic vesicle membrane. Functionally, involved in mitochondrial or peroxisomal functions and amino acid signaling pathways. In Debaryomyces hansenii (strain ATCC 36239 / CBS 767 / BCRC 21394 / JCM 1990 / NBRC 0083 / IGC 2968) (Yeast), this protein is SVP1-like protein 2 (HSV2).